We begin with the raw amino-acid sequence, 224 residues long: Uridylate kinase (224 aa).

Residue 9 to 10 (GS) participates in ATP binding. G43 is a UMP binding site. 2 residues coordinate ATP: G44 and R48. UMP-binding positions include D65 and 113–119 (TEPAHST). ATP-binding residues include T139, Y145, and D148.

It belongs to the UMP kinase family. Homohexamer.

It localises to the cytoplasm. It carries out the reaction UMP + ATP = UDP + ADP. It functions in the pathway pyrimidine metabolism; CTP biosynthesis via de novo pathway; UDP from UMP (UMPK route): step 1/1. Its activity is regulated as follows. Inhibited by UTP. Its function is as follows. Catalyzes the reversible phosphorylation of UMP to UDP. This Methanothermobacter thermautotrophicus (strain ATCC 29096 / DSM 1053 / JCM 10044 / NBRC 100330 / Delta H) (Methanobacterium thermoautotrophicum) protein is Uridylate kinase.